Consider the following 444-residue polypeptide: 23S rRNA (uracil(1939)-C(5))-methyltransferase RlmD (444 aa).

A TRAM domain is found at 5–64 (KPKLNLTSQTARIVNLSHDGRGIARVNGKATFIQGALPGEVVEFQYTRVKKDFDEGKLLS). Residues cysteine 77, cysteine 83, cysteine 86, and cysteine 166 each contribute to the [4Fe-4S] cluster site. Glutamine 276, phenylalanine 305, asparagine 310, glutamate 326, asparagine 353, and aspartate 374 together coordinate S-adenosyl-L-methionine. Cysteine 400 acts as the Nucleophile in catalysis.

The protein belongs to the class I-like SAM-binding methyltransferase superfamily. RNA M5U methyltransferase family. RlmD subfamily.

It catalyses the reaction uridine(1939) in 23S rRNA + S-adenosyl-L-methionine = 5-methyluridine(1939) in 23S rRNA + S-adenosyl-L-homocysteine + H(+). Its function is as follows. Catalyzes the formation of 5-methyl-uridine at position 1939 (m5U1939) in 23S rRNA. In Legionella pneumophila (strain Paris), this protein is 23S rRNA (uracil(1939)-C(5))-methyltransferase RlmD.